We begin with the raw amino-acid sequence, 521 residues long: Probable rhamnogalacturonase B (521 aa).

The N-terminal stretch at 1 to 21 is a signal peptide; the sequence is MRLHAFTLLSLLGLVPSFAAA. Cysteines 42 and 68 form a disulfide. Residue Asn145 is glycosylated (N-linked (GlcNAc...) asparagine). Residue Asp219 is the Proton donor of the active site. Cysteines 221 and 238 form a disulfide. N-linked (GlcNAc...) asparagine glycosylation is present at Asn239. The active site involves His294. Asn321 carries N-linked (GlcNAc...) asparagine glycosylation. Disulfide bonds link Cys344–Cys350 and Cys372–Cys381. The tract at residues 462 to 521 is disordered; it reads ETPAAASRSEQVVQGAPQETGQSAPESAGPVPSGNPGPVPTGGSRPSRHRHGHHHFGSAI. Residues 469–486 show a composition bias toward polar residues; the sequence is RSEQVVQGAPQETGQSAP. Residues 507–521 show a composition bias toward basic residues; sequence PSRHRHGHHHFGSAI.

The protein belongs to the glycosyl hydrolase 28 family.

The protein localises to the secreted. The enzyme catalyses Endohydrolysis of alpha-D-GalA-(1-&gt;2)-alpha-L-Rha glycosidic bond in the rhamnogalacturonan I backbone with initial inversion of anomeric configuration releasing oligosaccharides with beta-D-GalA at the reducing end.. Its function is as follows. Pectinolytic enzymes consist of four classes of enzymes: pectine lyase, polygalacturonase, pectin methylesterase and rhamnogalacturonase. Hydrolyzes alpha-D-galacturonopyranosyl-(1,2)-alpha-L-rhamnopyranosyl linkages in the backbone of the hairy regions of pectins. This Aspergillus fumigatus (strain CBS 144.89 / FGSC A1163 / CEA10) (Neosartorya fumigata) protein is Probable rhamnogalacturonase B (rhgB).